A 354-amino-acid polypeptide reads, in one-letter code: Protein RecA (354 aa).

67–74 (GPESSGKT) is an ATP binding site.

It belongs to the RecA family.

Its subcellular location is the cytoplasm. Can catalyze the hydrolysis of ATP in the presence of single-stranded DNA, the ATP-dependent uptake of single-stranded DNA by duplex DNA, and the ATP-dependent hybridization of homologous single-stranded DNAs. It interacts with LexA causing its activation and leading to its autocatalytic cleavage. The protein is Protein RecA of Chlamydia muridarum (strain MoPn / Nigg).